Reading from the N-terminus, the 141-residue chain is Large ribosomal subunit protein uL11 (141 aa).

This sequence belongs to the universal ribosomal protein uL11 family. Part of the ribosomal stalk of the 50S ribosomal subunit. Interacts with L10 and the large rRNA to form the base of the stalk. L10 forms an elongated spine to which L12 dimers bind in a sequential fashion forming a multimeric L10(L12)X complex. In terms of processing, one or more lysine residues are methylated.

Forms part of the ribosomal stalk which helps the ribosome interact with GTP-bound translation factors. The sequence is that of Large ribosomal subunit protein uL11 from Chlamydia trachomatis serovar A (strain ATCC VR-571B / DSM 19440 / HAR-13).